A 256-amino-acid chain; its full sequence is uncharacterized protein (256 aa).

Helical transmembrane passes span 155–175 (ITGM…GLWL) and 203–223 (ITTT…YLLI).

Its subcellular location is the cell membrane. This is an uncharacterized protein from Mycobacterium bovis (strain ATCC BAA-935 / AF2122/97).